Consider the following 636-residue polypeptide: ATP-dependent zinc metalloprotease FtsH 1 (636 aa).

Topologically, residues 1–18 (MKLSPPKKNLPPQKNNEP) are cytoplasmic. Residues 19–39 (PFPYLRLLVQVGIALFLVWIW) traverse the membrane as a helical segment. At 40–126 (QESLHKATVS…YGSVKPSLLS (87 aa)) the chain is on the periplasmic side. Residues 127 to 147 (QILFSWVVPILIFFLVWFALA) form a helical membrane-spanning segment. Over 148–636 (RFMGGGGAGY…KEAPSYSSTL (489 aa)) the chain is Cytoplasmic. Position 220–227 (220–227 (GPPGTGKT)) interacts with ATP. Position 442 (H442) interacts with Zn(2+). The active site involves E443. Residues H446 and D519 each coordinate Zn(2+).

The protein in the central section; belongs to the AAA ATPase family. This sequence in the C-terminal section; belongs to the peptidase M41 family. As to quaternary structure, homohexamer. Requires Zn(2+) as cofactor.

It localises to the cell inner membrane. Its function is as follows. Acts as a processive, ATP-dependent zinc metallopeptidase for both cytoplasmic and membrane proteins. Plays a role in the quality control of integral membrane proteins. The chain is ATP-dependent zinc metalloprotease FtsH 1 from Methylacidiphilum infernorum (isolate V4) (Methylokorus infernorum (strain V4)).